Consider the following 448-residue polypeptide: Probable glycine dehydrogenase (decarboxylating) subunit 1 (448 aa).

It belongs to the GcvP family. N-terminal subunit subfamily. As to quaternary structure, the glycine cleavage system is composed of four proteins: P, T, L and H. In this organism, the P 'protein' is a heterodimer of two subunits.

The enzyme catalyses N(6)-[(R)-lipoyl]-L-lysyl-[glycine-cleavage complex H protein] + glycine + H(+) = N(6)-[(R)-S(8)-aminomethyldihydrolipoyl]-L-lysyl-[glycine-cleavage complex H protein] + CO2. Functionally, the glycine cleavage system catalyzes the degradation of glycine. The P protein binds the alpha-amino group of glycine through its pyridoxal phosphate cofactor; CO(2) is released and the remaining methylamine moiety is then transferred to the lipoamide cofactor of the H protein. In Geobacillus sp. (strain WCH70), this protein is Probable glycine dehydrogenase (decarboxylating) subunit 1.